Consider the following 365-residue polypeptide: Phosphatidylcholine:ceramide cholinephosphotransferase 4 (365 aa).

Over 1 to 44 the chain is Cytoplasmic; sequence MISYPFFSLSPPGLVPPPMAVPPVEMYSGSFWNRMRKPLPLRTQ. A helical membrane pass occupies residues 45-65; sequence VIRFTVVFVIVSFILAVALQI. The Lumenal segment spans residues 66–92; the sequence is THERMPDPKVTKPLPDLGFELLTKVPG. The chain crosses the membrane as a helical span at residues 93–113; the sequence is MYVLADCCIGFLNILSVFTAF. Residues 114–165 lie on the Cytoplasmic side of the membrane; that stretch reads KLYLLHRHCVGSGEPELPCNIPGVSRFFLSVWLCKENCRIELRNVHTIAWIR. Residues 166 to 186 form a helical membrane-spanning segment; that stretch reads FITSYALLLLFRSVVIVMTSL. Over 187 to 229 the chain is Lumenal; that stretch reads PAPDDLCQDPPKIENPVKNVILTVLTAGGGSIHCGDLMYSGHT. Residue His228 is part of the active site. The chain crosses the membrane as a helical span at residues 230-250; sequence VILTLHLMFHWIYGAMVHWSF. Arg251 is a topological domain (cytoplasmic). The helical transmembrane segment at 252–272 threads the bilayer; it reads PVVTVVAIFGYYCIVASRFHY. Residues His271 and Asp275 contribute to the active site. The Lumenal segment spans residues 273-275; it reads TDD. A helical membrane pass occupies residues 276–296; that stretch reads VLVAIYLTIATFIAVGHNADG. Over 297-365 the chain is Cytoplasmic; that stretch reads APWQLQLFIR…ALMFKCGAYV (69 aa).

This sequence belongs to the sphingomyelin synthase family.

Its subcellular location is the golgi apparatus membrane. It carries out the reaction an N-acylsphing-4-enine + a 1,2-diacyl-sn-glycero-3-phosphocholine = a sphingomyelin + a 1,2-diacyl-sn-glycerol. In terms of biological role, bidirectional lipid cholinephosphotransferase capable of converting phosphatidylcholine (PC) and ceramide to sphingomyelin (SM) and diacylglycerol (DAG) and vice versa. Direction is dependent on the relative concentrations of DAG and ceramide as phosphocholine acceptors. Directly and specifically recognizes the choline head group on the substrate. Also requires two fatty chains on the choline-P donor molecule in order to be recognized efficiently as a substrate. Does not function strictly as a SM synthase. Essential for viability of the pathogenic bloodstream stage of this human protozoan parasite and, consequently, can be considered as potential drug target. In Trypanosoma brucei brucei (strain 927/4 GUTat10.1), this protein is Phosphatidylcholine:ceramide cholinephosphotransferase 4.